The sequence spans 748 residues: Polyribonucleotide nucleotidyltransferase (748 aa).

The Mg(2+) site is built by Asp-522 and Asp-528. Residues 588–647 (PRVTTIRVPVDKIGEVIGPKGKIINAITEETGAQISIEDDGTVFVGATDGPSAQAAIDRI) form the KH domain. Positions 659–728 (GERFLGTVVK…KRGKISLVLV (70 aa)) constitute an S1 motif domain.

It belongs to the polyribonucleotide nucleotidyltransferase family. The cofactor is Mg(2+).

Its subcellular location is the cytoplasm. The catalysed reaction is RNA(n+1) + phosphate = RNA(n) + a ribonucleoside 5'-diphosphate. Functionally, involved in mRNA degradation. Catalyzes the phosphorolysis of single-stranded polyribonucleotides processively in the 3'- to 5'-direction. The protein is Polyribonucleotide nucleotidyltransferase of Mycobacterium avium (strain 104).